The following is a 526-amino-acid chain: ATP synthase subunit alpha (526 aa).

An ATP-binding site is contributed by 171–178 (GDRQTGKT).

It belongs to the ATPase alpha/beta chains family. F-type ATPases have 2 components, CF(1) - the catalytic core - and CF(0) - the membrane proton channel. CF(1) has five subunits: alpha(3), beta(3), gamma(1), delta(1), epsilon(1). CF(0) has four main subunits: a, b, b' and c.

The protein resides in the cell inner membrane. The catalysed reaction is ATP + H2O + 4 H(+)(in) = ADP + phosphate + 5 H(+)(out). Its function is as follows. Produces ATP from ADP in the presence of a proton gradient across the membrane. The alpha chain is a regulatory subunit. The sequence is that of ATP synthase subunit alpha from Chlorobium phaeobacteroides (strain BS1).